The primary structure comprises 584 residues: Long-chain-fatty-acid--AMP ligase FadD23 (584 aa).

2 consecutive transmembrane segments (helical) span residues 199–219 (YFADTGAVPPLDLFIMSWLPF) and 225–245 (LVLGVCAPIIVGCGAVLTSPV).

Belongs to the ATP-dependent AMP-binding enzyme family.

The protein resides in the membrane. It catalyses the reaction holo-[(hydroxy)phthioceranic acid synthase] + hexadecanoate + ATP = hexadecanoyl-[(hydroxy)phthioceranic acid synthase] + AMP + diphosphate. The enzyme catalyses holo-[(hydroxy)phthioceranic acid synthase] + octadecanoate + ATP = octadecanoyl-[(hydroxy)phthioceranic acid synthase] + AMP + diphosphate. It functions in the pathway lipid metabolism; fatty acid biosynthesis. Its function is as follows. Catalyzes the activation of long-chain fatty acids as acyl-adenylates (acyl-AMP), which are then transferred to the multifunctional polyketide synthase (PKS) type III for further chain extension. Involved in the biosynthesis of sulfolipid 1 (SL-1). This chain is Long-chain-fatty-acid--AMP ligase FadD23 (fadD23), found in Mycobacterium bovis (strain ATCC BAA-935 / AF2122/97).